A 238-amino-acid chain; its full sequence is MWASGSVKIPTHIAVIPDGNRRYAKKTGIDFYHAYKKGVEKVRNFLTWALEFRDIKNVTFFALSTENLQRSKIELEILFRIFEDELRRTLEDPLIHDNKVRVRFIGDRSLLPGKVVKYIDELESVTKNYSNYHLTIALGYGGRAEIVRCIKRVLSGEVRLETFSEEELFQCLDTRGIPNPEPDVVVRTGGEKRLSNFLLYQTAYSELIFLEKLWPEVEREDLVYIIEEYSRRQRRFGR.

Asp-18 is an active-site residue. Residue Asp-18 participates in Mg(2+) binding. Substrate is bound by residues 19–22 (GNRR) and 64–66 (STE). Residue Asn-67 is the Proton acceptor of the active site. Substrate is bound by residues Arg-70, Arg-187, and 193-195 (RLS). Glu-206 serves as a coordination point for Mg(2+).

It belongs to the UPP synthase family. As to quaternary structure, homodimer. It depends on Mg(2+) as a cofactor.

The catalysed reaction is geranylgeranyl diphosphate + 7 isopentenyl diphosphate = tri-trans,hepta-cis-undecaprenyl diphosphate + 7 diphosphate. In terms of biological role, catalyzes the sequential condensation of isopentenyl diphosphate (IPP) with geranylgeranyl diphosphate (GGPP) to yield (2Z,6Z,10Z,14Z,18Z,22Z,26Z,30E,34E,38E)-undecaprenyl diphosphate (tritrans,heptacis-UPP). It is probably the precursor of glycosyl carrier lipids. This is Tritrans,polycis-undecaprenyl-diphosphate synthase (geranylgeranyl-diphosphate specific) from Pyrobaculum aerophilum (strain ATCC 51768 / DSM 7523 / JCM 9630 / CIP 104966 / NBRC 100827 / IM2).